The primary structure comprises 516 residues: 2,3-bisphosphoglycerate-independent phosphoglycerate mutase (516 aa).

Positions 15 and 65 each coordinate Mn(2+). The active-site Phosphoserine intermediate is Ser-65. Substrate is bound by residues His-126, 156-157, Arg-188, Arg-194, 263-266, and Lys-336; these read RD and RADR. 5 residues coordinate Mn(2+): Asp-403, His-407, Asp-444, His-445, and His-463.

This sequence belongs to the BPG-independent phosphoglycerate mutase family. Monomer. The cofactor is Mn(2+).

It catalyses the reaction (2R)-2-phosphoglycerate = (2R)-3-phosphoglycerate. It participates in carbohydrate degradation; glycolysis; pyruvate from D-glyceraldehyde 3-phosphate: step 3/5. Its function is as follows. Catalyzes the interconversion of 2-phosphoglycerate and 3-phosphoglycerate. In Francisella tularensis subsp. holarctica (strain OSU18), this protein is 2,3-bisphosphoglycerate-independent phosphoglycerate mutase.